A 235-amino-acid chain; its full sequence is Type III pantothenate kinase (235 aa).

6 to 13 (DVGNTSLK) is a binding site for ATP. Residues Y79 and 86–89 (GIDR) contribute to the substrate site. D88 serves as the catalytic Proton acceptor. Position 109 (D109) interacts with K(+). T112 serves as a coordination point for ATP. T164 contacts substrate.

It belongs to the type III pantothenate kinase family. Homodimer. The cofactor is NH4(+). Requires K(+) as cofactor.

It localises to the cytoplasm. The catalysed reaction is (R)-pantothenate + ATP = (R)-4'-phosphopantothenate + ADP + H(+). It participates in cofactor biosynthesis; coenzyme A biosynthesis; CoA from (R)-pantothenate: step 1/5. Functionally, catalyzes the phosphorylation of pantothenate (Pan), the first step in CoA biosynthesis. The protein is Type III pantothenate kinase of Pseudoalteromonas translucida (strain TAC 125).